The sequence spans 407 residues: Transcriptional regulator UL34 (407 aa).

2 disordered regions span residues 268–330 (AAGP…EELF) and 388–407 (SPSV…PLCI). A compositionally biased stretch (acidic residues) spans 273–286 (EADENNDEGEEDDD). The segment covering 287-301 (ELRHSDPAPLHESKK) has biased composition (basic and acidic residues). The segment covering 302–312 (PRNARRPRTRV) has biased composition (basic residues).

Belongs to the HHV-5 UL34 protein family.

It localises to the host nucleus. In terms of biological role, acts as a transcriptional repressor of the US3 gene expression through a specific DNA sequence named the transcriptional repressive element (tre). The protein is Transcriptional regulator UL34 (UL34) of Human cytomegalovirus (strain Towne) (HHV-5).